The following is a 472-amino-acid chain: 2-oxoisovalerate dehydrogenase subunit alpha 1, mitochondrial (472 aa).

Residues 1–56 (MAIWFARSKTLVSSLRHNLNLSTILIKRDYSHRPIFYTTSQLSSTAYLSPFGSLRH) constitute a mitochondrion transit peptide. 185-187 (QYR) contacts thiamine diphosphate. K(+) contacts are provided by Ser-234, Thr-239, and Gln-240.

This sequence belongs to the BCKDHA family. In terms of assembly, heterotetramer of alpha and beta chains. Thiamine diphosphate serves as cofactor.

It localises to the mitochondrion matrix. The enzyme catalyses N(6)-[(R)-lipoyl]-L-lysyl-[protein] + 3-methyl-2-oxobutanoate + H(+) = N(6)-[(R)-S(8)-2-methylpropanoyldihydrolipoyl]-L-lysyl-[protein] + CO2. Its function is as follows. The branched-chain alpha-keto dehydrogenase complex catalyzes the overall conversion of alpha-keto acids to acyl-CoA and CO(2). It contains multiple copies of three enzymatic components: branched-chain alpha-keto acid decarboxylase (E1), lipoamide acyltransferase (E2) and lipoamide dehydrogenase (E3). Required during sugar starvation. This is 2-oxoisovalerate dehydrogenase subunit alpha 1, mitochondrial from Arabidopsis thaliana (Mouse-ear cress).